The chain runs to 262 residues: Large ribosomal subunit protein uL5c (262 aa).

Residues 1–39 (MASPSLLQSSASSFHGRFSPLAAPSSARMLSPPLRNVVK) constitute a chloroplast transit peptide.

Belongs to the universal ribosomal protein uL5 family. In terms of assembly, part of the 50S ribosomal subunit; contacts the 5S rRNA.

It localises to the plastid. The protein localises to the chloroplast. Its function is as follows. Binds 5S rRNA, forms part of the central protuberance of the 50S subunit. In Arabidopsis thaliana (Mouse-ear cress), this protein is Large ribosomal subunit protein uL5c (RPL5).